We begin with the raw amino-acid sequence, 446 residues long: Na(+)-translocating NADH-quinone reductase subunit A (446 aa).

The protein belongs to the NqrA family. In terms of assembly, composed of six subunits; NqrA, NqrB, NqrC, NqrD, NqrE and NqrF.

It catalyses the reaction a ubiquinone + n Na(+)(in) + NADH + H(+) = a ubiquinol + n Na(+)(out) + NAD(+). NQR complex catalyzes the reduction of ubiquinone-1 to ubiquinol by two successive reactions, coupled with the transport of Na(+) ions from the cytoplasm to the periplasm. NqrA to NqrE are probably involved in the second step, the conversion of ubisemiquinone to ubiquinol. This chain is Na(+)-translocating NADH-quinone reductase subunit A, found in Vibrio vulnificus (strain CMCP6).